A 684-amino-acid chain; its full sequence is Homoaconitase, mitochondrial (684 aa).

[4Fe-4S] cluster-binding residues include Cys337, Cys397, and Cys400.

It belongs to the aconitase/IPM isomerase family. The cofactor is [4Fe-4S] cluster.

The protein localises to the mitochondrion. It catalyses the reaction (2R,3S)-homoisocitrate = cis-homoaconitate + H2O. It participates in amino-acid biosynthesis; L-lysine biosynthesis via AAA pathway; L-alpha-aminoadipate from 2-oxoglutarate: step 3/5. In terms of biological role, catalyzes the reversible hydration of cis-homoaconitate to (2R,3S)-homoisocitrate, a step in the alpha-aminoadipate pathway for lysine biosynthesis. The sequence is that of Homoaconitase, mitochondrial (LYS4) from Candida albicans (strain SC5314 / ATCC MYA-2876) (Yeast).